The sequence spans 98 residues: Molybdopterin synthase sulfur carrier subunit (98 aa).

At glycine 98 the chain carries 1-thioglycine; alternate. Glycyl adenylate; alternate is present on glycine 98.

This sequence belongs to the MoaD family. MOCS2A subfamily. Heterotetramer; composed of 2 small (MOCS2A) and 2 large (MOCS2B) subunits. Post-translationally, C-terminal thiocarboxylation occurs in 2 steps, it is first acyl-adenylated (-COAMP) via the hesA/moeB/thiF part of MOCS3, then thiocarboxylated (-COSH) via the rhodanese domain of MOCS3.

The protein localises to the cytoplasm. It participates in cofactor biosynthesis; molybdopterin biosynthesis. Its function is as follows. Acts as a sulfur carrier required for molybdopterin biosynthesis. Component of the molybdopterin synthase complex that catalyzes the conversion of precursor Z into molybdopterin by mediating the incorporation of 2 sulfur atoms into precursor Z to generate a dithiolene group. In the complex, serves as sulfur donor by being thiocarboxylated (-COSH) at its C-terminus by MOCS3. After interaction with MOCS2B, the sulfur is then transferred to precursor Z to form molybdopterin. This Aedes aegypti (Yellowfever mosquito) protein is Molybdopterin synthase sulfur carrier subunit.